The primary structure comprises 99 residues: MMMNAFFPAMALIVLVGCSTPPPVQKAQRVKVDPLRSLNMEALCKDQAAKRYNTGEQKIDVTAFEQFQGSYEMRGYTFRKEQFVCSFDADGHFLHLSMR.

The first 17 residues, 1-17, serve as a signal peptide directing secretion; sequence MMMNAFFPAMALIVLVG. The N-palmitoyl cysteine moiety is linked to residue C18. A lipid anchor (S-diacylglycerol cysteine) is attached at C18.

The protein resides in the cell membrane. This is an uncharacterized protein from Escherichia coli (strain UTI89 / UPEC).